Here is a 405-residue protein sequence, read N- to C-terminus: Calsequestrin-1 (405 aa).

Residues 1-34 (MRATDRMGARAVSELRLALLFVLVLGTPRLGVQG) form the signal peptide. At Y43 the chain carries Phosphotyrosine. Phosphoserine is present on S81. At T124 the chain carries Phosphothreonine. Residue S216 is modified to Phosphoserine. N350 carries N-linked (GlcNAc...) asparagine glycosylation. The interval 382-405 (EGEINTEDDDDDDDDDDDDDDDDD) is disordered.

Belongs to the calsequestrin family. As to quaternary structure, monomer; increases in response to a depletion of intracellular calcium. Homodimer. Homotetramer and homopolymer. Can form linear homooligomers. Ca(2+) ions promote oligomerization. Interacts (via C-terminal end and preferentially with the monomeric form) with STIM1; this interaction increases in response to a depletion of intracellular calcium, decreases both STIM1 aggregation and clustering, interaction of STIM1 with ORAI1 and store-operated Ca(2+) entry (SOCE) activity. Interacts with ASPH and TRDN. In terms of processing, N-glycosylated. As to expression, detected in skeletal muscle (at protein level). Detected in skeletal muscle.

The protein resides in the endoplasmic reticulum. Its subcellular location is the sarcoplasmic reticulum. It localises to the sarcoplasmic reticulum lumen. The protein localises to the sarcoplasmic reticulum membrane. It is found in the mitochondrion matrix. Its function is as follows. Calsequestrin is a high-capacity, moderate affinity, calcium-binding protein and thus acts as an internal calcium store in muscle. Calcium ions are bound by clusters of acidic residues at the protein surface, often at the interface between subunits. Can bind around 80 Ca(2+) ions. Regulates the release of lumenal Ca(2+) via the calcium release channel RYR1; this plays an important role in triggering muscle contraction. Negatively regulates store-operated Ca(2+) entry (SOCE) activity. The sequence is that of Calsequestrin-1 (Casq1) from Mus musculus (Mouse).